The following is a 302-amino-acid chain: Ribosomal protein L11 methyltransferase (302 aa).

S-adenosyl-L-methionine is bound by residues Thr155, Gly176, Asp198, and Asn239.

This sequence belongs to the methyltransferase superfamily. PrmA family.

The protein resides in the cytoplasm. It catalyses the reaction L-lysyl-[protein] + 3 S-adenosyl-L-methionine = N(6),N(6),N(6)-trimethyl-L-lysyl-[protein] + 3 S-adenosyl-L-homocysteine + 3 H(+). Its function is as follows. Methylates ribosomal protein L11. The chain is Ribosomal protein L11 methyltransferase from Caldicellulosiruptor saccharolyticus (strain ATCC 43494 / DSM 8903 / Tp8T 6331).